Reading from the N-terminus, the 345-residue chain is Centromere protein L (345 aa).

A phosphoserine mark is found at S40 and S54.

Belongs to the CENP-L/IML3 family. Component of the CENPA-CAD complex, composed of CENPI, CENPK, CENPL, CENPO, CENPP, CENPQ, CENPR and CENPS. The CENPA-CAD complex interacts with the CENPA-NAC complex, at least composed of CENPA, CENPC, CENPH, CENPM, CENPN, CENPT and CENPU.

The protein resides in the nucleus. It localises to the chromosome. It is found in the centromere. In terms of biological role, component of the CENPA-CAD (nucleosome distal) complex, a complex recruited to centromeres which is involved in assembly of kinetochore proteins, mitotic progression and chromosome segregation. May be involved in incorporation of newly synthesized CENPA into centromeres via its interaction with the CENPA-NAC complex. This Rattus norvegicus (Rat) protein is Centromere protein L (Cenpl).